The following is a 219-amino-acid chain: Glutathione S-transferase-like protein LUC7 (219 aa).

Residues 3–84 (PFGRLYSFMP…YLAQSGPYSE (82 aa)) form the GST N-terminal domain. Residues 90–219 (DAATSAKIRQ…NLIDVKRVHE (130 aa)) enclose the GST C-terminal domain.

The protein belongs to the GST superfamily.

Glutathione S-transferase-like protein; part of the gene cluster that mediates the biosynthesis of the mycotoxin lucilactaene and the lucilactaene-related compound NG-391 that act as cell cycle inhibitors with potent growth inhibitory activity against malarial parasites, moderate growth inhibitory activity against cancer cells, and no activity against bacteria and fungi. Within the cluster, LUC7 and LUC8 encode proteins which are not commonly involved in the biosynthesis of secondary metabolites and are not essential for lucilactaene biosynthesis. The protein is Glutathione S-transferase-like protein LUC7 of Fusarium sp.